The sequence spans 86 residues: UPF0457 protein SSP0714 (86 aa).

This sequence belongs to the UPF0457 family.

The sequence is that of UPF0457 protein SSP0714 from Staphylococcus saprophyticus subsp. saprophyticus (strain ATCC 15305 / DSM 20229 / NCIMB 8711 / NCTC 7292 / S-41).